Here is an 886-residue protein sequence, read N- to C-terminus: Protein suppressor of hairy wing (886 aa).

Disordered stretches follow at residues 24–62 and 167–211; these read SVSP…GIKG and DEVV…KNSG. Acidic residues predominate over residues 184 to 201; sequence VTEEEEEEEEDDLDEEGD. The C2H2-type 1; atypical zinc-finger motif lies at 221–243; sequence HVCGKCYKTFRRLMSLKKHLEFC. Residues 291 to 314 form a C2H2-type 2 zinc finger; sequence INCPDCPKSFKTQTSYERHIFITH. The C2H2-type 3; atypical zinc-finger motif lies at 320 to 342; it reads YPCSICNANLRSEALLKLHEEQH. C2H2-type zinc fingers lie at residues 349–367, 381–403, 414–436, 442–464, 470–492, 498–520, 524–546, 554–578, and 600–623; these read YACK…LKRH, MSCK…LKHH, YMCH…IRTH, FDCD…RRYH, YSCT…MKRH, HKCE…SKTH, FACD…VKEH, FSCT…AGDH, and TDCA…RSVH. The span at 571–587 shows a compositional bias: basic and acidic residues; it reads QHMDAGDHSEKSGEKPQ. The tract at residues 571-594 is disordered; it reads QHMDAGDHSEKSGEKPQRAKRSST.

The protein localises to the nucleus. In terms of biological role, component of the gypsy chromatin insulator complex which is required for the function of the gypsy chromatin insulator and other endogenous chromatin insulators. Chromatin insulators are regulatory elements which establish independent domains of transcriptional activity within eukaryotic genomes. Insulators have two defining properties; they can block the communication between an enhancer and a promoter when placed between them and can also buffer transgenes from position effect variegation (PEV). Insulators are proposed to structure the chromatin fiber into independent domains of differing transcriptional potential by promoting the formation of distinct chromatin loops. This chromatin looping may involve the formation of insulator bodies, where homotypic interactions between individual subunits of the insulator complex could promote the clustering of widely spaced insulators at the nuclear periphery. Within the gypsy insulator complex, this protein binds specifically to a region of the gypsy element located 3' of the 5' long terminal repeat (LTR), and may also mediate interaction with other endogenous insulators at sites distinct from those recognized by Cp190. Cooperates with pita and cliff to recruit Cp190 and regulate insulator function at the front-ultraabdominal (Fub) boundary. The sequence is that of Protein suppressor of hairy wing (su(Hw)) from Drosophila ananassae (Fruit fly).